Here is a 240-residue protein sequence, read N- to C-terminus: uncharacterized protein (240 aa).

This is an uncharacterized protein from Bacillus subtilis (strain 168).